Reading from the N-terminus, the 396-residue chain is Elongation factor Tu (396 aa).

Positions 10–206 (KPHVNIGTIG…AVDESVPDPV (197 aa)) constitute a tr-type G domain. The segment at 19–26 (GHVDHGKT) is G1. Residue 19–26 (GHVDHGKT) coordinates GTP. Residue threonine 26 participates in Mg(2+) binding. A G2 region spans residues 62–66 (GITIN). The G3 stretch occupies residues 83–86 (DAPG). GTP-binding positions include 83–87 (DAPGH) and 138–141 (NKSD). Residues 138–141 (NKSD) form a G4 region. A G5 region spans residues 176–178 (SGL).

The protein belongs to the TRAFAC class translation factor GTPase superfamily. Classic translation factor GTPase family. EF-Tu/EF-1A subfamily. Monomer.

It localises to the cytoplasm. It carries out the reaction GTP + H2O = GDP + phosphate + H(+). GTP hydrolase that promotes the GTP-dependent binding of aminoacyl-tRNA to the A-site of ribosomes during protein biosynthesis. The protein is Elongation factor Tu of Paenarthrobacter aurescens (strain TC1).